Here is a 428-residue protein sequence, read N- to C-terminus: Putative FBD-associated F-box protein At5g56390 (428 aa).

The F-box domain maps to 2-50 (DKISQLHDELLLGILSLLPNAKDVVATMVLSKRWRYLWMMVPSLVYDDS). In terms of domain architecture, FBD spans 344 to 394 (CWNETSLVPEYLLPSLETFEWVDYEGTKTEKQVVAFILRIASCLKQATIVS).

This is Putative FBD-associated F-box protein At5g56390 from Arabidopsis thaliana (Mouse-ear cress).